A 663-amino-acid chain; its full sequence is Bicarbonate transport ATP-binding protein CmpC (663 aa).

One can recognise an ABC transporter domain in the interval V5–H239. G42–S49 lines the ATP pocket. A cmpA-like region spans residues L281 to A663.

It belongs to the ABC transporter superfamily. Nitrate/nitrite/cyanate uptake transporter (NitT) (TC 3.A.1.16) family. In terms of assembly, the complex is composed of two ATP-binding proteins (CmpC and CmpD), a transmembrane protein (CmpB) and a solute-binding protein (CmpA).

It is found in the cell inner membrane. Its function is as follows. Part of the ABC transporter complex CmpABCD involved in bicarbonate transport. Responsible for energy coupling to the transport system. The chain is Bicarbonate transport ATP-binding protein CmpC (cmpC) from Synechococcus elongatus (strain ATCC 33912 / PCC 7942 / FACHB-805) (Anacystis nidulans R2).